A 681-amino-acid chain; its full sequence is DNA ligase (681 aa).

Residues 34-38, 83-84, and E112 each bind NAD(+); these read DEEYD and SL. Residue K114 is the N6-AMP-lysine intermediate of the active site. The NAD(+) site is built by R135, E169, K285, and K309. Zn(2+)-binding residues include C403, C406, C422, and C427. One can recognise a BRCT domain in the interval 584-673; the sequence is TTSNILDGLT…GVELKESWKK (90 aa).

The protein belongs to the NAD-dependent DNA ligase family. LigA subfamily. Mg(2+) serves as cofactor. The cofactor is Mn(2+).

It carries out the reaction NAD(+) + (deoxyribonucleotide)n-3'-hydroxyl + 5'-phospho-(deoxyribonucleotide)m = (deoxyribonucleotide)n+m + AMP + beta-nicotinamide D-nucleotide.. In terms of biological role, DNA ligase that catalyzes the formation of phosphodiester linkages between 5'-phosphoryl and 3'-hydroxyl groups in double-stranded DNA using NAD as a coenzyme and as the energy source for the reaction. It is essential for DNA replication and repair of damaged DNA. The polypeptide is DNA ligase (Fervidobacterium nodosum (strain ATCC 35602 / DSM 5306 / Rt17-B1)).